The primary structure comprises 509 residues: tRNA-2-methylthio-N(6)-dimethylallyladenosine synthase (509 aa).

A compositionally biased stretch (polar residues) spans 1 to 15 (MNEQQRLASQQVNSS). A disordered region spans residues 1 to 23 (MNEQQRLASQQVNSSTKKEEKDY). The 119-residue stretch at 66–184 (RKFYIRTYGC…LPYILKDAMF (119 aa)) folds into the MTTase N-terminal domain. Residues cysteine 75, cysteine 111, cysteine 145, cysteine 221, cysteine 225, and cysteine 228 each coordinate [4Fe-4S] cluster. One can recognise a Radical SAM core domain in the interval 207–437 (RRGDIKAWVN…NALVNKLAIE (231 aa)). Residues 440–503 (DRYKGQIVEV…TWSLNGELVE (64 aa)) form the TRAM domain.

The protein belongs to the methylthiotransferase family. MiaB subfamily. In terms of assembly, monomer. [4Fe-4S] cluster is required as a cofactor.

It localises to the cytoplasm. It catalyses the reaction N(6)-dimethylallyladenosine(37) in tRNA + (sulfur carrier)-SH + AH2 + 2 S-adenosyl-L-methionine = 2-methylsulfanyl-N(6)-dimethylallyladenosine(37) in tRNA + (sulfur carrier)-H + 5'-deoxyadenosine + L-methionine + A + S-adenosyl-L-homocysteine + 2 H(+). In terms of biological role, catalyzes the methylthiolation of N6-(dimethylallyl)adenosine (i(6)A), leading to the formation of 2-methylthio-N6-(dimethylallyl)adenosine (ms(2)i(6)A) at position 37 in tRNAs that read codons beginning with uridine. This Bacillus anthracis protein is tRNA-2-methylthio-N(6)-dimethylallyladenosine synthase.